Reading from the N-terminus, the 97-residue chain is Protein MxiI (97 aa).

To S.typhimurium PrgJ.

In terms of biological role, necessary for the secretion of IPA invasins. The chain is Protein MxiI (mxiI) from Shigella flexneri.